The primary structure comprises 564 residues: Phosphomethylpyrimidine synthase (564 aa).

Residues Asn203, Met232, Tyr261, His297, 317–319, 358–361, and Glu397 contribute to the substrate site; these read SRG and DGLR. Residue His401 participates in Zn(2+) binding. A substrate-binding site is contributed by Tyr424. Position 465 (His465) interacts with Zn(2+). [4Fe-4S] cluster contacts are provided by Cys541, Cys544, and Cys549.

The protein belongs to the ThiC family. The cofactor is [4Fe-4S] cluster.

The enzyme catalyses 5-amino-1-(5-phospho-beta-D-ribosyl)imidazole + S-adenosyl-L-methionine = 4-amino-2-methyl-5-(phosphooxymethyl)pyrimidine + CO + 5'-deoxyadenosine + formate + L-methionine + 3 H(+). It participates in cofactor biosynthesis; thiamine diphosphate biosynthesis. Catalyzes the synthesis of the hydroxymethylpyrimidine phosphate (HMP-P) moiety of thiamine from aminoimidazole ribotide (AIR) in a radical S-adenosyl-L-methionine (SAM)-dependent reaction. This chain is Phosphomethylpyrimidine synthase, found in Bacteroides fragilis (strain ATCC 25285 / DSM 2151 / CCUG 4856 / JCM 11019 / LMG 10263 / NCTC 9343 / Onslow / VPI 2553 / EN-2).